Reading from the N-terminus, the 607-residue chain is ATP-dependent zinc metalloprotease FtsH 2 (607 aa).

At 1–2 (MR) the chain is on the cytoplasmic side. Residues 3 to 23 (SLWIVLVLVLGSALLLQVMAA) traverse the membrane as a helical segment. Topologically, residues 24 to 99 (SDDRIPYARF…PYTRVADELG (76 aa)) are periplasmic. A helical membrane pass occupies residues 100 to 120 (LPPYLWLLLPLAGLAAMGHLA). Topologically, residues 121 to 607 (SRRATTAGTI…LREMVASGEA (487 aa)) are cytoplasmic. 195–202 (GPPGTGKT) is an ATP binding site. Histidine 418 is a Zn(2+) binding site. Glutamate 419 is an active-site residue. Residues histidine 422 and aspartate 495 each coordinate Zn(2+).

In the central section; belongs to the AAA ATPase family. It in the C-terminal section; belongs to the peptidase M41 family. In terms of assembly, homohexamer. Zn(2+) serves as cofactor.

The protein resides in the cell inner membrane. Its function is as follows. Acts as a processive, ATP-dependent zinc metallopeptidase for both cytoplasmic and membrane proteins. Plays a role in the quality control of integral membrane proteins. In Sorangium cellulosum (strain So ce56) (Polyangium cellulosum (strain So ce56)), this protein is ATP-dependent zinc metalloprotease FtsH 2.